A 211-amino-acid polypeptide reads, in one-letter code: ATP-dependent Clp protease proteolytic subunit (211 aa).

S106 serves as the catalytic Nucleophile. H131 is an active-site residue.

This sequence belongs to the peptidase S14 family. Fourteen ClpP subunits assemble into 2 heptameric rings which stack back to back to give a disk-like structure with a central cavity, resembling the structure of eukaryotic proteasomes.

Its subcellular location is the cytoplasm. It catalyses the reaction Hydrolysis of proteins to small peptides in the presence of ATP and magnesium. alpha-casein is the usual test substrate. In the absence of ATP, only oligopeptides shorter than five residues are hydrolyzed (such as succinyl-Leu-Tyr-|-NHMec, and Leu-Tyr-Leu-|-Tyr-Trp, in which cleavage of the -Tyr-|-Leu- and -Tyr-|-Trp bonds also occurs).. In terms of biological role, cleaves peptides in various proteins in a process that requires ATP hydrolysis. Has a chymotrypsin-like activity. Plays a major role in the degradation of misfolded proteins. In Rhodopseudomonas palustris (strain BisA53), this protein is ATP-dependent Clp protease proteolytic subunit.